A 296-amino-acid chain; its full sequence is MKNTIIKGLTDLVEQKRDNLIRQVVVQLEAQGYKAVLEQATVQQFCRQFALSPVEFALRCLPVAACYALTPISQFNVGAIAIGQSGSFYFGANQEFVAASMQQTVHAEQSAISHAWLAGEKAIAHMVVNYTPCGHCRQFMNELNSAERLKIHLPHSQNNLLHNYLPDAFGPKDLNIQNVFFDGQSHPFNYQGHDPLIRAAVEAASQSYAPYSQAFSGVALQLGELIICGRYAENAAFNPTFLPLQSALNYQRLQGLIDVKVSRVVMAEAKADLTSLPMTQSLAGAHLGLDIEYISL.

2 CMP/dCMP-type deaminase domains span residues 52 to 167 (SPVE…YLPD) and 191 to 296 (QGHD…YISL). Residue 93-95 (NQE) participates in substrate binding. A Zn(2+)-binding site is contributed by H106. Catalysis depends on E108, which acts as the Proton donor. Zn(2+) contacts are provided by C133 and C136.

This sequence belongs to the cytidine and deoxycytidylate deaminase family. In terms of assembly, homodimer. Zn(2+) is required as a cofactor.

It carries out the reaction cytidine + H2O + H(+) = uridine + NH4(+). The catalysed reaction is 2'-deoxycytidine + H2O + H(+) = 2'-deoxyuridine + NH4(+). Functionally, this enzyme scavenges exogenous and endogenous cytidine and 2'-deoxycytidine for UMP synthesis. The chain is Cytidine deaminase from Mannheimia succiniciproducens (strain KCTC 0769BP / MBEL55E).